A 530-amino-acid chain; its full sequence is Chondroitin sulfate N-acetylgalactosaminyltransferase 1 (530 aa).

Residues 1 to 12 lie on the Cytoplasmic side of the membrane; it reads MVRRGLLGWISR. Residues 13–33 form a helical; Signal-anchor for type II membrane protein membrane-spanning segment; the sequence is VVILLVLLCCAISVLYMLACT. Residues 34-530 lie on the Lumenal side of the membrane; it reads PKGDQEQLGL…QKQKASSKKT (497 aa). Positions 57–93 form a coiled coil; the sequence is AVLQEREEQHRNYVNSLKRQIAQLKDELQARSEQFRS. The interval 88–107 is disordered; sequence SEQFRSGQDQASDATSLRSG. Over residues 91 to 105 the composition is skewed to polar residues; sequence FRSGQDQASDATSLR. 2 N-linked (GlcNAc...) asparagine glycosylation sites follow: N313 and N322. A divalent metal cation-binding residues include D358 and H475.

It belongs to the chondroitin N-acetylgalactosaminyltransferase family.

The protein resides in the golgi apparatus. Its subcellular location is the golgi stack membrane. The enzyme catalyses 3-O-(beta-D-GlcA-(1-&gt;3)-beta-D-Gal-(1-&gt;3)-beta-D-Gal-(1-&gt;4)-beta-D-Xyl)-L-seryl-[protein] + UDP-N-acetyl-alpha-D-galactosamine = 3-O-(beta-D-GalNAc-(1-&gt;4)-beta-D-GlcA-(1-&gt;3)-beta-D-Gal-(1-&gt;3)-beta-D-Gal-(1-&gt;4)-beta-D-Xyl)-L-seryl-[protein] + UDP + H(+). Its function is as follows. Transfers 1,4-N-acetylgalactosamine (GalNAc) from UDP-GalNAc to the non-reducing end of glucuronic acid (GlcUA). Required for addition of the first GalNAc to the core tetrasaccharide linker and for elongation of chondroitin chains. Important role in chondroitin chain biosynthesis in cartilage formation, and subsequent endochondral ossification. Moreover, is involved in the metabolism of aggrecan. The sequence is that of Chondroitin sulfate N-acetylgalactosaminyltransferase 1 from Mus musculus (Mouse).